The primary structure comprises 328 residues: Beta-ketoacyl-[acyl-carrier-protein] synthase III (328 aa).

Catalysis depends on residues cysteine 122 and histidine 255. The segment at 256 to 260 (QANIR) is ACP-binding. Residue asparagine 285 is part of the active site.

This sequence belongs to the thiolase-like superfamily. FabH family. As to quaternary structure, homodimer.

The protein localises to the cytoplasm. It catalyses the reaction malonyl-[ACP] + acetyl-CoA + H(+) = 3-oxobutanoyl-[ACP] + CO2 + CoA. It functions in the pathway lipid metabolism; fatty acid biosynthesis. In terms of biological role, catalyzes the condensation reaction of fatty acid synthesis by the addition to an acyl acceptor of two carbons from malonyl-ACP. Catalyzes the first condensation reaction which initiates fatty acid synthesis and may therefore play a role in governing the total rate of fatty acid production. Possesses both acetoacetyl-ACP synthase and acetyl transacylase activities. Its substrate specificity determines the biosynthesis of branched-chain and/or straight-chain of fatty acids. This chain is Beta-ketoacyl-[acyl-carrier-protein] synthase III, found in Polynucleobacter necessarius subsp. necessarius (strain STIR1).